Here is a 604-residue protein sequence, read N- to C-terminus: Prostaglandin G/H synthase 2 (604 aa).

Residues 1–17 form the signal peptide; it reads MLFRAVLLCAALGLSQA. An EGF-like domain is found at 18 to 55; the sequence is ANPCCSNPCQNRGECMSTGFDQYKCDCTRTGFYGENCT. Cystine bridges form between cysteine 21–cysteine 32, cysteine 22–cysteine 145, cysteine 26–cysteine 42, and cysteine 44–cysteine 54. Asparagine 53 carries an N-linked (GlcNAc...) asparagine glycan. Residue arginine 106 participates in substrate binding. Residue asparagine 130 is glycosylated (N-linked (GlcNAc...) asparagine). Histidine 193 serves as the catalytic Proton acceptor. Position 341 (tyrosine 341) interacts with substrate. Tyrosine 371 (for cyclooxygenase activity) is an active-site residue. Histidine 374 contacts heme b. A glycan (N-linked (GlcNAc...) asparagine) is linked at asparagine 396. Position 526 is an S-nitrosocysteine (cysteine 526). Cysteine 555 and cysteine 561 form a disulfide bridge. Position 565 is an O-acetylserine; by SPHK1 (serine 565). Asparagine 580 carries an N-linked (GlcNAc...) asparagine glycan.

This sequence belongs to the prostaglandin G/H synthase family. As to quaternary structure, homodimer. Requires heme b as cofactor. Post-translationally, S-nitrosylation by NOS2 (iNOS) activates enzyme activity. S-nitrosylation may take place on different Cys residues in addition to Cys-526. In terms of processing, acetylated at Ser-565 by SPHK1. During neuroinflammation, acetylation by SPHK1 promotes neuronal secretion of specialized preresolving mediators (SPMs), especially 15-R-lipoxin A4, which results in an increase of phagocytic microglia. As to expression, following colon injury, expressed in the wound bed mesenchyme during the first phase of repair, probably by colonic mesenchymal stem cells (at protein level).

The protein localises to the microsome membrane. It is found in the endoplasmic reticulum membrane. It localises to the nucleus inner membrane. Its subcellular location is the nucleus outer membrane. The enzyme catalyses (5Z,8Z,11Z,14Z)-eicosatetraenoate + AH2 + 2 O2 = prostaglandin H2 + A + H2O. It catalyses the reaction (5Z,8Z,11Z,14Z)-eicosatetraenoate + 2 O2 = prostaglandin G2. It carries out the reaction prostaglandin G2 + AH2 = prostaglandin H2 + A + H2O. The catalysed reaction is (5Z,8Z,11Z,14Z,17Z)-eicosapentaenoate + 2 O2 = prostaglandin G3. The enzyme catalyses prostaglandin G3 + AH2 = prostaglandin H3 + A + H2O. It catalyses the reaction (8Z,11Z,14Z)-eicosatrienoate + 2 O2 = prostaglandin G1. It carries out the reaction prostaglandin G1 + AH2 = prostaglandin H1 + A + H2O. The catalysed reaction is 2-(5Z,8Z,11Z,14Z)-eicosatetraenoyl-sn-glycero-3-phosphoethanolamine + 2 O2 = 2-(prostaglandin G2)-sn-glycero-3-phosphoethanolamine. The enzyme catalyses 2-(prostaglandin G2)-sn-glycero-3-phosphoethanolamine + AH2 = 2-(prostaglandin H2)-sn-glycero-3-phosphoethanolamine + A + H2O. It catalyses the reaction 2-(5Z,8Z,11Z,14Z)-eicosatetraenoyl-sn-glycero-3-phosphocholine + 2 O2 = 2-(prostaglandin G2)-sn-glycero-3-phosphocholine. It carries out the reaction 2-(prostaglandin G2)-sn-glycero-3-phosphocholine + AH2 = 2-(prostaglandin H2)-sn-glycero-3-phosphocholine + A + H2O. The catalysed reaction is (15S)-hydroperoxy-(5Z,8Z,11Z,13E)-eicosatetraenoate + AH2 = (15S)-hydroxy-(5Z,8Z,11Z,13E)-eicosatetraenoate + A + H2O. The enzyme catalyses 2-(5Z,8Z,11Z,14Z)-eicosatetraenoyl-sn-glycero-3-phosphocholine + AH2 + O2 = 2-[(15S)-hydroxy-(5Z,8Z,11Z,13E)-eicosatetraenoyl]-sn-glycero-3-phosphocholine + A + H2O. It catalyses the reaction 2-(5Z,8Z,11Z,14Z)-eicosatetraenoyl-sn-glycero-3-phosphocholine + AH2 + O2 = 2-[(15R)-hydroxy-(5Z,8Z,11Z,13E)-eicosatetraenoyl]-sn-glycero-3-phosphocholine + A + H2O. It carries out the reaction 2-(5Z,8Z,11Z,14Z)-eicosatetraenoyl-sn-glycero-3-phosphocholine + AH2 + O2 = 2-[(11R)-hydroxy-(5Z,8Z,12E,14Z)-eicosatetraenoyl]-sn-glycero-3-phosphocholine + A + H2O. The catalysed reaction is (9Z,12Z)-octadecadienoate + AH2 + O2 = 9-hydroxy-(10E,12Z)-octadecadienoate + A + H2O. The enzyme catalyses (9Z,12Z)-octadecadienoate + AH2 + O2 = 13-hydroxy-(9Z,11E)-octadecadienoate + A + H2O. It catalyses the reaction (5Z,8Z,11Z,14Z)-eicosatetraenoate + AH2 + O2 = (15R)-hydroxy-(5Z,8Z,11Z,13E)-eicosatetraenoate + A + H2O. It carries out the reaction (5Z,8Z,11Z,14Z)-eicosatetraenoate + AH2 + O2 = (11R)-hydroxy-(5Z,8Z,12E,14Z)-eicosatetraenoate + A + H2O. The catalysed reaction is (5Z,8Z,11Z,14Z,17Z)-eicosapentaenoate + AH2 + O2 = (11R)-hydroxy-(5Z,8Z,12E,14Z,17Z)-eicosapentaenoate + A + H2O. The enzyme catalyses (5Z,8Z,11Z,14Z,17Z)-eicosapentaenoate + AH2 + O2 = (18S)-hydroxy-(5Z,8Z,11Z,14Z,16E)-eicosapentaenoate + A + H2O. It catalyses the reaction (5Z,8Z,11Z,14Z,17Z)-eicosapentaenoate + AH2 + O2 = (18R)-hydroxy-(5Z,8Z,11Z,14Z,16E)-eicosapentaenoate + A + H2O. It carries out the reaction (5Z,8Z,11Z,14Z,17Z)-eicosapentaenoate + AH2 + O2 = (15R)-hydroxy-(5Z,8Z,11Z,13E,17Z)-eicosapentaenoate + A + H2O. The catalysed reaction is (5Z,8Z,11Z,14Z,17Z)-eicosapentaenoate + AH2 + O2 = (15S)-hydroxy-(5Z,8Z,11Z,13E,17Z)-eicosapentaenoate + A + H2O. The enzyme catalyses (7Z,10Z,13Z,16Z,19Z)-docosapentaenoate + AH2 + O2 = 13R-hydroxy-(7Z,10Z,14E,16Z,19Z)-docosapentaenoate + A + H2O. It catalyses the reaction (4Z,7Z,10Z,13Z,16Z,19Z)-docosahexaenoate + AH2 + O2 = 13-hydroxy-(4Z,7Z,10Z,14E,16Z,19Z)-docosahexaenoate + A + H2O. It carries out the reaction (5S)-hydroxy-(6E,8Z,11Z,14Z)-eicosatetraenoate + AH2 + O2 = (5S,15R)-dihydroxy-(6E,8Z,11Z,13E)-eicosatetraenoate + A + H2O. The catalysed reaction is (4Z,7Z,10Z,13Z,16Z,19Z)-docosahexaenoate + AH2 + O2 = 17R-hydroxy-(4Z,7Z,10Z,13Z,15E,19Z)-docosahexaenoate + A + H2O. The enzyme catalyses (5S)-hydroxy-(6E,8Z,11Z,14Z)-eicosatetraenoate + AH2 + O2 = (5S,15S)-dihydroxy-(6E,8Z,11Z,13E)-eicosatetraenoate + A + H2O. It catalyses the reaction (5S)-hydroxy-(6E,8Z,11Z,14Z)-eicosatetraenoate + AH2 + O2 = (5S,11R)-dihydroxy-(6E,8Z,12E,14Z)-eicosatetraenoate + A + H2O. It carries out the reaction 2-(5Z,8Z,11Z,14Z-eicosatetraenoyl)-glycerol + 2 O2 = 2-glyceryl-prostaglandin G2. The catalysed reaction is 2-glyceryl-prostaglandin G2 + AH2 = 2-glyceryl-prostaglandin H2 + A + H2O. The enzyme catalyses (5Z,8Z,11Z,14Z)-eicosatetraenoate + O2 = (15R)-hydroperoxy-(5Z,8Z,11Z,13E)-eicosatetraenoate. It catalyses the reaction (5Z,8Z,11Z,14Z)-eicosatetraenoate + O2 = 11R-hydroperoxy-(5Z,8Z,12E,14Z)-eicosatetraenoate. It carries out the reaction (9Z,12Z)-octadecadienoate + AH2 + O2 = (9R)-hydroxy-(10E,12Z)-octadecadienoate + A + H2O. The catalysed reaction is (9Z,12Z)-octadecadienoate + AH2 + O2 = (9S)-hydroxy-(10E,12Z)-octadecadienoate + A + H2O. The enzyme catalyses (9Z,12Z)-octadecadienoate + AH2 + O2 = (13S)-hydroxy-(9Z,11E)-octadecadienoate + A + H2O. It catalyses the reaction (9Z,12Z)-octadecadienoate + AH2 + O2 = (13R)-hydroxy-(9Z,11E)-octadecadienoate + A + H2O. It functions in the pathway lipid metabolism; prostaglandin biosynthesis. Its activity is regulated as follows. Inhibited by the nonsteroidal anti-inflammatory drugs aspirin, naproxen, diclofenac, meclofenamic acid, indomethacin and their analogs. Functionally, dual cyclooxygenase and peroxidase in the biosynthesis pathway of prostanoids, a class of C20 oxylipins mainly derived from arachidonate, with a particular role in the inflammatory response. The cyclooxygenase activity oxygenates arachidonate (AA, C20:4(n-6)) to the hydroperoxy endoperoxide prostaglandin G2 (PGG2), and the peroxidase activity reduces PGG2 to the hydroxy endoperoxide PGH2, the precursor of all 2-series prostaglandins and thromboxanes. This complex transformation is initiated by abstraction of hydrogen at carbon 13 (with S-stereochemistry), followed by insertion of molecular O2 to form the endoperoxide bridge between carbon 9 and 11 that defines prostaglandins. The insertion of a second molecule of O2 (bis-oxygenase activity) yields a hydroperoxy group in PGG2 that is then reduced to PGH2 by two electrons. Similarly catalyzes successive cyclooxygenation and peroxidation of dihomo-gamma-linoleate (DGLA, C20:3(n-6)) and eicosapentaenoate (EPA, C20:5(n-3)) to corresponding PGH1 and PGH3, the precursors of 1- and 3-series prostaglandins. In an alternative pathway of prostanoid biosynthesis, converts 2-arachidonoyl lysophopholipids to prostanoid lysophopholipids, which are then hydrolyzed by intracellular phospholipases to release free prostanoids. Metabolizes 2-arachidonoyl glycerol yielding the glyceryl ester of PGH2, a process that can contribute to pain response. Generates lipid mediators from n-3 and n-6 polyunsaturated fatty acids (PUFAs) via a lipoxygenase-type mechanism. Oxygenates PUFAs to hydroperoxy compounds and then reduces them to corresponding alcohols. Plays a role in the generation of resolution phase interaction products (resolvins) during both sterile and infectious inflammation. Metabolizes docosahexaenoate (DHA, C22:6(n-3)) to 17R-HDHA, a precursor of the D-series resolvins (RvDs). As a component of the biosynthetic pathway of E-series resolvins (RvEs), converts eicosapentaenoate (EPA, C20:5(n-3)) primarily to 18S-HEPE that is further metabolized by ALOX5 and LTA4H to generate 18S-RvE1 and 18S-RvE2. In vascular endothelial cells, converts docosapentaenoate (DPA, C22:5(n-3)) to 13R-HDPA, a precursor for 13-series resolvins (RvTs) shown to activate macrophage phagocytosis during bacterial infection. In activated leukocytes, contributes to oxygenation of hydroxyeicosatetraenoates (HETE) to diHETES (5,15-diHETE and 5,11-diHETE). Can also use linoleate (LA, (9Z,12Z)-octadecadienoate, C18:2(n-6)) as substrate and produce hydroxyoctadecadienoates (HODEs) in a regio- and stereospecific manner, being (9R)-HODE ((9R)-hydroxy-(10E,12Z)-octadecadienoate) and (13S)-HODE ((13S)-hydroxy-(9Z,11E)-octadecadienoate) its major products. During neuroinflammation, plays a role in neuronal secretion of specialized preresolving mediators (SPMs) 15R-lipoxin A4 that regulates phagocytic microglia. This Mus musculus (Mouse) protein is Prostaglandin G/H synthase 2.